Consider the following 514-residue polypeptide: Glycosyltransferase-like At3g57200 (514 aa).

A disordered region spans residues 1–23; the sequence is MAGLYSSSSSSKPTLSSSPSSSS. The N-terminal stretch at 1–39 is a signal peptide; the sequence is MAGLYSSSSSSKPTLSSSPSSSSSSRLFLLVTLLPLSLA. 4 N-linked (GlcNAc...) asparagine glycosylation sites follow: N156, N187, N251, and N460. Residues 457-514 form a disordered region; the sequence is PSKNSSTADSTSGITRESSQETGKRRVLEFHLDVDGESQASAVPPQSPPGLEATQMEL. A compositionally biased stretch (polar residues) spans 458–473; sequence SKNSSTADSTSGITRE. The span at 474–490 shows a compositional bias: basic and acidic residues; the sequence is SSQETGKRRVLEFHLDV.

The protein belongs to the glycosyltransferase 25 family.

The protein resides in the secreted. It is found in the cell wall. It localises to the cytoplasm. Its subcellular location is the cell membrane. In terms of biological role, involved in the coordination between cell elongation and cellulose synthesis by promoting the expression of genes involved in cell elongation and cellulose synthesis. Acts as a regulator of plasmodesmatal permeability. Maybe a glycosyltransferase. The sequence is that of Glycosyltransferase-like At3g57200 from Arabidopsis thaliana (Mouse-ear cress).